A 139-amino-acid polypeptide reads, in one-letter code: Protein Turandot B (139 aa).

Positions 1 to 21 (MNFNMSMICFALLLIVTLCSA) are cleaved as a signal peptide.

This sequence belongs to the Turandot family.

The protein localises to the secreted. In terms of biological role, a humoral factor that may play a role in stress tolerance. The chain is Protein Turandot B from Drosophila yakuba (Fruit fly).